We begin with the raw amino-acid sequence, 700 residues long: Elongation factor G 2 (700 aa).

Positions 8–290 (ERYRNIGISA…AVIDFLPSPV (283 aa)) constitute a tr-type G domain. Residues 17–24 (AHIDAGKT), 88–92 (DTPGH), and 142–145 (NKMD) each bind GTP.

This sequence belongs to the TRAFAC class translation factor GTPase superfamily. Classic translation factor GTPase family. EF-G/EF-2 subfamily.

The protein localises to the cytoplasm. In terms of biological role, catalyzes the GTP-dependent ribosomal translocation step during translation elongation. During this step, the ribosome changes from the pre-translocational (PRE) to the post-translocational (POST) state as the newly formed A-site-bound peptidyl-tRNA and P-site-bound deacylated tRNA move to the P and E sites, respectively. Catalyzes the coordinated movement of the two tRNA molecules, the mRNA and conformational changes in the ribosome. The polypeptide is Elongation factor G 2 (Burkholderia mallei (strain ATCC 23344)).